Consider the following 255-residue polypeptide: AA9 family lytic polysaccharide monooxygenase D (255 aa).

Residues 1-19 (MYRTLGSIALLAGGAAAHG) form the signal peptide. His18 and His92 together coordinate Cu(2+). 2 cysteine pairs are disulfide-bonded: Cys65/Cys189 and Cys104/Cys111. N-linked (GlcNAc...) asparagine glycosylation occurs at Asn152. Residues His178 and Gln184 each contribute to the O2 site. A Cu(2+)-binding site is contributed by Tyr186. N-linked (GlcNAc...) asparagine glycosylation is present at Asn220.

Belongs to the polysaccharide monooxygenase AA9 family. The cofactor is Cu(2+).

It is found in the secreted. It carries out the reaction [(1-&gt;4)-beta-D-glucosyl]n+m + reduced acceptor + O2 = 4-dehydro-beta-D-glucosyl-[(1-&gt;4)-beta-D-glucosyl]n-1 + [(1-&gt;4)-beta-D-glucosyl]m + acceptor + H2O.. In terms of biological role, lytic polysaccharide monooxygenase (LPMO) that depolymerizes crystalline and amorphous polysaccharides via the oxidation of scissile alpha- or beta-(1-4)-glycosidic bonds, yielding specifically C1 oxidation product. Catalysis by LPMOs requires the reduction of the active-site copper from Cu(II) to Cu(I) by a reducing agent and H(2)O(2) or O(2) as a cosubstrate. Is active on regenerated amorphous cellulose (RAC) in the presence of ascorbic acid or 3-methylcatechol. Also acts on phosphoric acid swollen cellulose (PASC) as a substrate. In Thermothelomyces thermophilus (strain ATCC 42464 / BCRC 31852 / DSM 1799) (Sporotrichum thermophile), this protein is AA9 family lytic polysaccharide monooxygenase D.